Consider the following 469-residue polypeptide: Trigger factor (469 aa).

Positions 162–243 (GDFVSIDLSA…VKSVKERELP (82 aa)) constitute a PPIase FKBP-type domain. A disordered region spans residues 438 to 469 (GPSGEQAAEDSAEESTDAAEGEAAEDADDTDK). Residues 444-469 (AAEDSAEESTDAAEGEAAEDADDTDK) are compositionally biased toward acidic residues.

Belongs to the FKBP-type PPIase family. Tig subfamily.

The protein localises to the cytoplasm. The enzyme catalyses [protein]-peptidylproline (omega=180) = [protein]-peptidylproline (omega=0). In terms of biological role, involved in protein export. Acts as a chaperone by maintaining the newly synthesized protein in an open conformation. Functions as a peptidyl-prolyl cis-trans isomerase. This Mycolicibacterium smegmatis (strain ATCC 700084 / mc(2)155) (Mycobacterium smegmatis) protein is Trigger factor.